The primary structure comprises 109 residues: ATPase inhibitor mai-2, mitochondrial (109 aa).

2 disordered regions span residues 17–39 and 73–95; these read RFST…SIRD and QEVD…HQKR. A compositionally biased stretch (gly residues) spans 21–35; the sequence is GGHGDGAGRGGGSGG. A coiled-coil region spans residues 45 to 109; it reads GKMEAAREDE…EAEERALGKE (65 aa).

Belongs to the ATPase inhibitor family.

It localises to the mitochondrion. Thought to be a regulatory component of the ATP-synthesizing complex in the mitochondria. This chain is ATPase inhibitor mai-2, mitochondrial, found in Caenorhabditis briggsae.